We begin with the raw amino-acid sequence, 354 residues long: Ribosomal RNA large subunit methyltransferase M (354 aa).

S-adenosyl-L-methionine contacts are provided by residues serine 183, serine 216–glycine 219, aspartate 235, aspartate 255, and aspartate 271. Lysine 300 functions as the Proton acceptor in the catalytic mechanism.

This sequence belongs to the class I-like SAM-binding methyltransferase superfamily. RNA methyltransferase RlmE family. RlmM subfamily. As to quaternary structure, monomer.

It is found in the cytoplasm. It carries out the reaction cytidine(2498) in 23S rRNA + S-adenosyl-L-methionine = 2'-O-methylcytidine(2498) in 23S rRNA + S-adenosyl-L-homocysteine + H(+). Its function is as follows. Catalyzes the 2'-O-methylation at nucleotide C2498 in 23S rRNA. This chain is Ribosomal RNA large subunit methyltransferase M, found in Pseudomonas entomophila (strain L48).